Reading from the N-terminus, the 203-residue chain is MLILASASQSRKKLLENCQIEFFQISSDFDETTIQEKNIFNLALELSFQKANSLSENIQNLSLPEELNHGPLEILGCDSIFEFKGEAYGKPSNKEEAFIRWKKMSGEFGFLHTGHTLIIGNFDSTSKIFKITEIIKKTVSSRVYFSNLEDWEIKSYVDTNEPLYCAGGFALEGIGGKYIEKIEGCFSNVMGLSLPWLRKNLYR.

The active-site Proton acceptor is the Asp-78.

It belongs to the Maf family. The cofactor is a divalent metal cation.

It is found in the cytoplasm. The catalysed reaction is a ribonucleoside 5'-triphosphate + H2O = a ribonucleoside 5'-phosphate + diphosphate + H(+). The enzyme catalyses a 2'-deoxyribonucleoside 5'-triphosphate + H2O = a 2'-deoxyribonucleoside 5'-phosphate + diphosphate + H(+). In terms of biological role, nucleoside triphosphate pyrophosphatase. May have a dual role in cell division arrest and in preventing the incorporation of modified nucleotides into cellular nucleic acids. The chain is Nucleoside triphosphate pyrophosphatase from Prochlorococcus marinus (strain MIT 9301).